We begin with the raw amino-acid sequence, 155 residues long: Ribosome maturation factor RimP (155 aa).

It belongs to the RimP family.

Its subcellular location is the cytoplasm. Required for maturation of 30S ribosomal subunits. This chain is Ribosome maturation factor RimP, found in Lachnoclostridium phytofermentans (strain ATCC 700394 / DSM 18823 / ISDg) (Clostridium phytofermentans).